The chain runs to 557 residues: Putative UDP-glucuronate:xylan alpha-glucuronosyltransferase 4 (557 aa).

A helical; Signal-anchor for type II membrane protein membrane pass occupies residues 11-31 (KIFMIYLILVSLSLLGLILPF). Mn(2+)-binding residues include aspartate 365 and aspartate 367. Substrate is bound by residues 365–367 (DAD), 394–396 (NSG), 421–425 (NGGDQ), and 466–471 (HYLGLK). Histidine 466 serves as a coordination point for Mn(2+).

Belongs to the glycosyltransferase 8 family. Glycogenin subfamily. Requires Mn(2+) as cofactor.

The protein resides in the golgi apparatus membrane. Functionally, may be involved in the substitutions of the xylan backbone in stem glucuronoxylan. This is Putative UDP-glucuronate:xylan alpha-glucuronosyltransferase 4 (GUX4) from Arabidopsis thaliana (Mouse-ear cress).